A 54-amino-acid chain; its full sequence is Ductus ejaculatorius peptide 99B (54 aa).

Residues 1-21 form the signal peptide; it reads MKTPLFLLLVVLASLLGLALS. A Pyrrolidone carboxylic acid modification is found at Gln22. Residue Asn25 is glycosylated (N-linked (GlcNAc...) asparagine). Cys40 and Cys52 form a disulfide bridge. Residues 53 to 54 constitute a propeptide that is removed on maturation; it reads RK.

The protein to paragonial peptide B. In terms of tissue distribution, ductus ejaculatorius.

The protein resides in the secreted. Induces post-mating responses; increased oviposition and reduced receptivity. This is Ductus ejaculatorius peptide 99B (Dup99B) from Drosophila melanogaster (Fruit fly).